The primary structure comprises 269 residues: BAG family molecular chaperone regulator 4 (269 aa).

The interval 1–40 (MMHNSTEESEWEVRPGGMLVQRRDDAASSDHKPLQDPDSA) is disordered. Residues 21-35 (QRRDDAASSDHKPLQ) show a composition bias toward basic and acidic residues. Positions 46–122 (QTIRITVSHG…LVVVVEDTNK (77 aa)) constitute a Ubiquitin-like domain. The region spanning 138–219 (AIAAVNAVTG…NLQEAVDKLK (82 aa)) is the BAG domain. The disordered stretch occupies residues 241–269 (SFGNGVGSLNPPPPASPSANVTQDWEKFD).

In terms of assembly, binds to the ATPase domain of HSP70/HSC70 chaperones. Interacts with HSP70-1. As to expression, detected in stems, leaves, flowers and roots.

In terms of biological role, co-chaperone that regulates diverse cellular pathways, such as programmed cell death and stress responses. The sequence is that of BAG family molecular chaperone regulator 4 (BAG4) from Arabidopsis thaliana (Mouse-ear cress).